A 31-amino-acid chain; its full sequence is Cytochrome b6-f complex subunit 6 (31 aa).

Residues 3–23 form a helical membrane-spanning segment; sequence ILIGYIILLACAFGLAAGLFF.

This sequence belongs to the PetL family. The 4 large subunits of the cytochrome b6-f complex are cytochrome b6, subunit IV (17 kDa polypeptide, PetD), cytochrome f and the Rieske protein, while the 4 small subunits are PetG, PetL, PetM and PetN. The complex functions as a dimer.

The protein resides in the plastid. It localises to the chloroplast thylakoid membrane. Component of the cytochrome b6-f complex, which mediates electron transfer between photosystem II (PSII) and photosystem I (PSI), cyclic electron flow around PSI, and state transitions. PetL is important for photoautotrophic growth as well as for electron transfer efficiency and stability of the cytochrome b6-f complex. The protein is Cytochrome b6-f complex subunit 6 of Rhodomonas salina (Cryptomonas salina).